The chain runs to 318 residues: MEVLSPPLRDVDLTGPDGSLCNFATADDFYDDPCFDSPDLRFFEDLDPRLVHVGALLKPEEHSHFPAAAHPAPGAREDEHVRAPSGHHQAGRCLLWACKACKRKTTNADRRKAATMRERRRLSKVNEAFETLKRCTSSNPNQRLPKVEILRNAIRYIEGLQALLRDQDAAPPGAAAAFYAPGPLPPGRSGEHYSGDSDASSPRSNCSDGMMDYSGPPSGARRRNCYDRTYYSEAPNEPRPGKSAAVSSLDCLSSIVERISTESPAAPALLLADAPPESSPGPQEAAGSEVERGTPAPSPDTAPQGLAGANPNPIYQVL.

Met-1 participates in a covalent cross-link: Peptide (Met-Gly) (interchain with G-Cter in ubiquitin). Lys-104 is subject to N6-methyllysine; by EHMT2. One can recognise a bHLH domain in the interval 109 to 160 (DRRKAATMRERRRLSKVNEAFETLKRCTSSNPNQRLPKVEILRNAIRYIEGL). Disordered stretches follow at residues 174–224 (AAAA…RRRN) and 266–318 (APAL…YQVL). A compositionally biased stretch (polar residues) spans 197–207 (SDASSPRSNCS). A compositionally biased stretch (low complexity) spans 266-276 (APALLLADAPP).

As to quaternary structure, efficient DNA binding requires dimerization with another bHLH protein. Seems to form active heterodimers with ITF-2. Interacts with SUV39H1. Interacts with DDX5. Interacts with CHD2. Interacts with TSC22D3. Interacts with SETD3. Interacts with P-TEFB complex; promotes the transcriptional activity of MYOD1 through its CDK9-mediated phosphorylation. Interacts with CSRP3. Interacts with NUPR1. In terms of processing, phosphorylated by CDK9. This phosphorylation promotes its function in muscle differentiation. Post-translationally, acetylated by a complex containing EP300 and PCAF. The acetylation is essential to activate target genes. Conversely, its deacetylation by SIRT1 inhibits its function. Ubiquitinated on the N-terminus; which is required for proteasomal degradation. In terms of processing, methylation at Lys-104 by EHMT2/G9a inhibits myogenic activity.

Its subcellular location is the nucleus. Functionally, acts as a transcriptional activator that promotes transcription of muscle-specific target genes and plays a role in muscle differentiation. Together with MYF5 and MYOG, co-occupies muscle-specific gene promoter core region during myogenesis. Induces fibroblasts to differentiate into myoblasts. Interacts with and is inhibited by the twist protein. This interaction probably involves the basic domains of both proteins. This chain is Myoblast determination protein 1 (MYOD1), found in Bos taurus (Bovine).